Consider the following 1938-residue polypeptide: Myosin-6 (1938 aa).

The Myosin N-terminal SH3-like domain occupies 32 to 81; sequence DIRTECFVPDDKEEYVKAKVVSREGGKVTAETENGKTVTIKEDQVMQQNP. In terms of domain architecture, Myosin motor spans 85–780; that stretch reads DKIEDMAMLT…LLGLLEEMRD (696 aa). The residue at position 129 (lysine 129) is an N6,N6,N6-trimethyllysine. Position 178–185 (178–185) interacts with ATP; that stretch reads GESGAGKT. At threonine 379 the chain carries Phosphothreonine. Phosphoserine is present on serine 417. 2 actin-binding regions span residues 657–679 and 759–773; these read LNKLMTNLKTTHPHFVRCIIPNE and KFGHTKVFFKAGLLG. The IQ domain maps to 783 to 812; it reads LSRIITRIQAQARGQLMRIEFKKIVERRDA. 2 calmodulin-binding regions span residues 790–807 and 816–833; these read IQAQARGQLMRIEFKKIV and IQWNIRAFMGVKNWPWMK. Residues 842 to 1938 are a coiled coil; it reads LKSAETEKEM…IGAKKMHDEE (1097 aa). Serine 1090 and serine 1139 each carry phosphoserine. A Phosphotyrosine modification is found at tyrosine 1261. Phosphoserine is present on serine 1271. Phosphothreonine occurs at positions 1277 and 1284. The residue at position 1309 (serine 1309) is a Phosphoserine. Tyrosine 1310 is subject to Phosphotyrosine. The residue at position 1311 (threonine 1311) is a Phosphothreonine. Serine 1512 carries the post-translational modification Phosphoserine. The residue at position 1515 (threonine 1515) is a Phosphothreonine. The segment at 1909–1938 is disordered; that stretch reads EERADIAESQVNKLRAKSRDIGAKKMHDEE. Residues 1925–1938 are compositionally biased toward basic and acidic residues; it reads KSRDIGAKKMHDEE.

The protein belongs to the TRAFAC class myosin-kinesin ATPase superfamily. Myosin family. Muscle myosin is a hexameric protein that consists of 2 heavy chain subunits (MHC), 2 alkali light chain subunits (MLC) and 2 regulatory light chain subunits (MLC-2).

The protein resides in the cytoplasm. Its subcellular location is the myofibril. Functionally, muscle contraction. In Mus musculus (Mouse), this protein is Myosin-6 (Myh6).